A 407-amino-acid polypeptide reads, in one-letter code: Na(+)-translocating NADH-quinone reductase subunit F (407 aa).

A helical membrane pass occupies residues 6–26; sequence IFLAIGMFTAIVLGLVAIILV. The region spanning 35–127 is the 2Fe-2S ferredoxin-type domain; sequence GDVTIQINGE…DMQIRVPEEV (93 aa). Residues cysteine 70, cysteine 76, cysteine 79, and cysteine 111 each contribute to the [2Fe-2S] cluster site. One can recognise an FAD-binding FR-type domain in the interval 130-269; the sequence is VKKWECTVES…YGPFGEFFAK (140 aa).

The protein belongs to the NqrF family. Composed of six subunits; NqrA, NqrB, NqrC, NqrD, NqrE and NqrF. [2Fe-2S] cluster serves as cofactor. Requires FAD as cofactor.

It is found in the cell inner membrane. It carries out the reaction a ubiquinone + n Na(+)(in) + NADH + H(+) = a ubiquinol + n Na(+)(out) + NAD(+). NQR complex catalyzes the reduction of ubiquinone-1 to ubiquinol by two successive reactions, coupled with the transport of Na(+) ions from the cytoplasm to the periplasm. The first step is catalyzed by NqrF, which accepts electrons from NADH and reduces ubiquinone-1 to ubisemiquinone by a one-electron transfer pathway. The polypeptide is Na(+)-translocating NADH-quinone reductase subunit F (Pseudomonas paraeruginosa (strain DSM 24068 / PA7) (Pseudomonas aeruginosa (strain PA7))).